Reading from the N-terminus, the 68-residue chain is Conotoxin Lp5.2 (68 aa).

An N-terminal signal peptide occupies residues 1-19 (MRCVPVFIILLLLASPAAP). Positions 20 to 54 (KSLETRIQNDLIRAGLTDADLKTEKGFLSGLLNVA) are excised as a propeptide.

This sequence belongs to the conotoxin T superfamily. Contains 2 disulfide bonds that can be either 'C1-C3, C2-C4' or 'C1-C4, C2-C3', since these disulfide connectivities have been observed for conotoxins with cysteine framework V (for examples, see AC P0DQQ7 and AC P81755). In terms of tissue distribution, expressed by the venom duct.

The protein localises to the secreted. This Conus leopardus (Leopard cone) protein is Conotoxin Lp5.2.